Consider the following 450-residue polypeptide: Glutathione reductase (450 aa).

Residues S14, G15, E34, T41, C42, and K50 each contribute to the FAD site. S14 is a glutathione binding site. Residues C42 and C47 are joined by a disulfide bond. Y99 serves as a coordination point for glutathione. A115 provides a ligand contact to FAD. NADP(+) contacts are provided by A175, I178, E181, R198, R204, and G262. D303 is a binding site for FAD. NADP(+) is bound at residue E309. T311 contributes to the FAD binding site. R319 lines the glutathione pocket. V342 lines the NADP(+) pocket. Residue H439 coordinates FAD. H439 serves as the catalytic Proton acceptor.

This sequence belongs to the class-I pyridine nucleotide-disulfide oxidoreductase family. As to quaternary structure, homodimer. It depends on FAD as a cofactor.

It is found in the cytoplasm. It carries out the reaction 2 glutathione + NADP(+) = glutathione disulfide + NADPH + H(+). Its function is as follows. Catalyzes the reduction of glutathione disulfide (GSSG) to reduced glutathione (GSH). Constitutes the major mechanism to maintain a high GSH:GSSG ratio in the cytosol. The sequence is that of Glutathione reductase (gor) from Escherichia coli (strain K12).